A 521-amino-acid polypeptide reads, in one-letter code: Cytochrome P450 1A1 (521 aa).

Phe-229 contacts substrate. A heme-binding site is contributed by Cys-463.

This sequence belongs to the cytochrome P450 family. Heme serves as cofactor.

It is found in the endoplasmic reticulum membrane. It localises to the microsome membrane. The enzyme catalyses an organic molecule + reduced [NADPH--hemoprotein reductase] + O2 = an alcohol + oxidized [NADPH--hemoprotein reductase] + H2O + H(+). In terms of biological role, cytochromes P450 are a group of heme-thiolate monooxygenases. They oxidize a variety of structurally unrelated compounds, including steroids, fatty acids, and xenobiotics. This chain is Cytochrome P450 1A1 (cyp1a1), found in Platichthys flesus (European flounder).